The sequence spans 403 residues: Riboflavin biosynthesis protein RibBA (403 aa).

The tract at residues 1–204 (MKNKVFASIG…IGELVNYRRR (204 aa)) is DHBP synthase. D-ribulose 5-phosphate is bound by residues 30–31 (RE), Asp-35, 143–147 (RTGHT), and Glu-167. Position 31 (Glu-31) interacts with Mg(2+). Residue His-146 coordinates Mg(2+). The interval 205–403 (TEKFISEIVN…EKMGHMLKKV (199 aa)) is GTP cyclohydrolase II. 255–259 (RVHSS) lines the GTP pocket. Positions 260, 271, and 273 each coordinate Zn(2+). GTP contacts are provided by residues Gln-276, 298–300 (EGR), and Thr-320. Catalysis depends on Asp-332, which acts as the Proton acceptor; for GTP cyclohydrolase activity. Residue Arg-334 is the Nucleophile; for GTP cyclohydrolase activity of the active site. GTP-binding residues include Thr-355 and Lys-360.

The protein in the N-terminal section; belongs to the DHBP synthase family. In the C-terminal section; belongs to the GTP cyclohydrolase II family. Mg(2+) serves as cofactor. Mn(2+) is required as a cofactor. Requires Zn(2+) as cofactor.

It catalyses the reaction D-ribulose 5-phosphate = (2S)-2-hydroxy-3-oxobutyl phosphate + formate + H(+). It carries out the reaction GTP + 4 H2O = 2,5-diamino-6-hydroxy-4-(5-phosphoribosylamino)-pyrimidine + formate + 2 phosphate + 3 H(+). Its pathway is cofactor biosynthesis; riboflavin biosynthesis; 2-hydroxy-3-oxobutyl phosphate from D-ribulose 5-phosphate: step 1/1. It functions in the pathway cofactor biosynthesis; riboflavin biosynthesis; 5-amino-6-(D-ribitylamino)uracil from GTP: step 1/4. Its function is as follows. Catalyzes the conversion of D-ribulose 5-phosphate to formate and 3,4-dihydroxy-2-butanone 4-phosphate. In terms of biological role, catalyzes the conversion of GTP to 2,5-diamino-6-ribosylamino-4(3H)-pyrimidinone 5'-phosphate (DARP), formate and pyrophosphate. In Endomicrobium trichonymphae, this protein is Riboflavin biosynthesis protein RibBA.